A 289-amino-acid chain; its full sequence is Syntaxin-3 (289 aa).

At 1 to 263 (MKDRLEQLKA…MKYQGQARKK (263 aa)) the chain is on the cytoplasmic side. The stretch at 32 to 111 (MDEFFSEIEE…IEEDEVRSSA (80 aa)) forms a coiled coil. One can recognise a t-SNARE coiled-coil homology domain in the interval 191–253 (LSEIEGRHKD…EKARDETKRA (63 aa)). Residues 264-284 (LIIIIVIVVVLLGILALIIGL) form a helical; Anchor for type IV membrane protein membrane-spanning segment. At 285–289 (SVGLK) the chain is on the extracellular side.

The protein belongs to the syntaxin family. As to quaternary structure, interacts with REEP6. Interacts with PRPH2 in rod and cone photoreceptors. Interacts with ROM1. Interacts with SNAP25. Interacts with VAMP2. Heart, spleen, lung and kidney.

Its subcellular location is the membrane. In terms of biological role, potentially involved in docking of synaptic vesicles at presynaptic active zones. Apical receptor involved in membrane fusion of apical vesicles. Essential for survival of retinal photoreceetors. This Rattus norvegicus (Rat) protein is Syntaxin-3 (Stx3).